The following is a 158-amino-acid chain: NAD(P)H-quinone oxidoreductase subunit J, chloroplastic (158 aa).

Belongs to the complex I 30 kDa subunit family. As to quaternary structure, NDH is composed of at least 16 different subunits, 5 of which are encoded in the nucleus.

It localises to the plastid. The protein localises to the chloroplast thylakoid membrane. The catalysed reaction is a plastoquinone + NADH + (n+1) H(+)(in) = a plastoquinol + NAD(+) + n H(+)(out). It catalyses the reaction a plastoquinone + NADPH + (n+1) H(+)(in) = a plastoquinol + NADP(+) + n H(+)(out). NDH shuttles electrons from NAD(P)H:plastoquinone, via FMN and iron-sulfur (Fe-S) centers, to quinones in the photosynthetic chain and possibly in a chloroplast respiratory chain. The immediate electron acceptor for the enzyme in this species is believed to be plastoquinone. Couples the redox reaction to proton translocation, and thus conserves the redox energy in a proton gradient. The protein is NAD(P)H-quinone oxidoreductase subunit J, chloroplastic of Lemna minor (Common duckweed).